The following is a 402-amino-acid chain: Beta sliding clamp (402 aa).

This sequence belongs to the beta sliding clamp family. In terms of assembly, forms a ring-shaped head-to-tail homodimer around DNA which binds and tethers DNA polymerases and other proteins to the DNA. The DNA replisome complex has a single clamp-loading complex (3 tau and 1 each of delta, delta', psi and chi subunits) which binds 3 Pol III cores (1 core on the leading strand and 2 on the lagging strand) each with a beta sliding clamp dimer. Additional proteins in the replisome are other copies of gamma, psi and chi, Ssb, DNA helicase and RNA primase.

It localises to the cytoplasm. Functionally, confers DNA tethering and processivity to DNA polymerases and other proteins. Acts as a clamp, forming a ring around DNA (a reaction catalyzed by the clamp-loading complex) which diffuses in an ATP-independent manner freely and bidirectionally along dsDNA. Initially characterized for its ability to contact the catalytic subunit of DNA polymerase III (Pol III), a complex, multichain enzyme responsible for most of the replicative synthesis in bacteria; Pol III exhibits 3'-5' exonuclease proofreading activity. The beta chain is required for initiation of replication as well as for processivity of DNA replication. This chain is Beta sliding clamp (dnaN), found in Mycobacterium tuberculosis (strain CDC 1551 / Oshkosh).